The primary structure comprises 1315 residues: MQEDSIEASTSISQLLRESYLAETRHRGDNERSRAEPSSNPFHFSGPGAAEGGGPEDLPDLSAFLSQEELDESVNLARLAINHDPLERVDEAQARKRLSSDQTKHASKPSFEPAFHQDSSRGPASPKDSPPETKRPQYSSETQSKKVFLNKAADFIEELSSLFKAHSSKRIRPRACKNHKSKTESQNKVLQENSPTFSDLTERRERASVPIPIPADSRDNELNHAIEQREAKRREAELAAGEAAAGDSTPGSSPSSLYYEEPLGQPPRFTQKLRSREVPEGSRVQLDCIVVGIPPPQVRWYCEGKELENSPDIHIVQAGNLHSLTIAEAFEEDTGRYSCFASNIYGTDSTSAEIYIEGVSSSDSEGDPNKEEMNRIQKPNEVSSPPTTSAAIPPAAEAQPLAAQPRVSTVQQCQSPTNYLQGLNGKPIIAAPVFTKMLQNLSASEGQLVVFECRVKGAPSPKVEWYREGTLIEDSPDFRILQKKPRSMAEPEEICTLVIAEVFSEDSGCFTCTASNKYGTVSSIAQLDVRGNEDISDNGALHSANSTTNPAVAEHQPSPLNPQPLSEEQPPKPKLEGVLVNHNEPRSSSRIGLRVHFNLPEDDKDMEASSGSGAANTSQTRPNSFPERFNGQEARIPEPSSPIKEPPPVLAKPKLDSTQLQQLHNQVLLEQQQLQNTSPSSPKESLHMSALNSAPPAVTISSKQVKGPAPQMFNLARPKHFFPASSTSTATVSPSSSPVFTLSNTPQTIQRTVSKESLLMAHPSTQGRSPGGLSIQNEPAPPSPAEPAAPPTAAYSIPSGNQFQPHCVSPTPVSPTGRIQNPVAFLSSVLPSLPSIPPTNAMGLPKSAPSVPSQGLMKKTTKAPQAVSDDYIRETKNSVILDLGKKVNFGDVRSHQQEYKISSFEQRLMNEIEFRLERTPVDESDDEIEHDEIPTGKCIAPIFDKRLKHFRVTEGSPVTFTCKIVGIPVPKVYWFKDGKQISKRNEHCKMRREGDGTCSLHIESTHGDDDGNYTIMAANPQGRISCSGHLMVQGLPIRSRLSPALSHRGRSRMQERDKEPLQERFFRPHFLQAPGDMVAHEGRLCRLDCKVSGLPPPELTWLLNGQPVLPDASHKMLVRETGVHSLLIDPLTQRDAGTYTCVATNKTGQNSFSLELTVVAKEVKKAPVILEKLQNSGVPEGHPVRLEGRVIGMPPPVFYWKKDNETIPFTRERISMHQDTTGYVCLLIQPAKKSDAGWYTLSAKNEAGIVSCTARLDIYAQWHQQIPTPISIRPSGSRYGSLTSKGLDIFSAFSSVESTMLYSCTSRSVVESDEL.

4 disordered regions span residues 19-60, 81-145, 166-204, and 230-266; these read SYLA…DLPD, INHD…TQSK, HSSK…TERR, and EAKR…LGQP. 2 stretches are compositionally biased toward basic and acidic residues: residues 23-35 and 84-104; these read ETRH…RSRA and DPLE…DQTK. 2 positions are modified to phosphoserine: S99 and S129. Positions 166–180 are enriched in basic residues; it reads HSSKRIRPRACKNHK. The span at 184–199 shows a compositional bias: polar residues; sequence ESQNKVLQENSPTFSD. Positions 219 to 240 form a coiled coil; it reads DNELNHAIEQREAKRREAELAA. Phosphothreonine is present on T249. One can recognise an Ig-like 1 domain in the interval 267–357; sequence PRFTQKLRSR…DSTSAEIYIE (91 aa). C288 and C339 are disulfide-bonded. The tract at residues 359–392 is disordered; the sequence is VSSSDSEGDPNKEEMNRIQKPNEVSSPPTTSAAI. Residues 432–528 enclose the Ig-like 2 domain; the sequence is PVFTKMLQNL…GTVSSIAQLD (97 aa). C453 and C512 form a disulfide bridge. Disordered regions lie at residues 535–652, 674–704, and 725–747; these read ISDN…VLAK, LQNT…SSKQ, and SSTS…NTPQ. Over residues 609 to 623 the composition is skewed to polar residues; sequence SSGSGAANTSQTRPN. S641 carries the post-translational modification Phosphoserine. Positions 725–741 are enriched in low complexity; it reads SSTSTATVSPSSSPVFT. S754 carries the phosphoserine modification. 2 disordered regions span residues 762–814 and 840–865; these read HPST…TPVS and NAMG…KAPQ. Over residues 779-790 the composition is skewed to pro residues; it reads PAPPSPAEPAAP. Residues S809 and S814 each carry the phosphoserine modification. Residues S903 and S924 each carry the phosphoserine modification. Ig-like domains lie at 941 to 1025, 1068 to 1157, and 1167 to 1257; these read PIFD…GRIS, PHFL…LELT, and PVIL…ARLD. Residues C1089 and C1141 are joined by a disulfide bond.

Belongs to the myotilin/palladin family. Interacts with TTN/titin, NEB, NEBL, ACTN2 and CARP.

It is found in the cytoplasm. It localises to the nucleus. The protein localises to the myofibril. Its subcellular location is the sarcomere. The protein resides in the z line. Its function is as follows. Component of the sarcomere that tethers together nebulin (skeletal muscle) and nebulette (cardiac muscle) to alpha-actinin, at the Z lines. The polypeptide is Myopalladin (Mypn) (Mus musculus (Mouse)).